The primary structure comprises 530 residues: Bifunctional purine biosynthesis protein PurH (530 aa).

Positions 1–148 constitute an MGS-like domain; the sequence is MNNARPIHRA…KNHKDVAIVV (148 aa).

The protein belongs to the PurH family.

The enzyme catalyses (6R)-10-formyltetrahydrofolate + 5-amino-1-(5-phospho-beta-D-ribosyl)imidazole-4-carboxamide = 5-formamido-1-(5-phospho-D-ribosyl)imidazole-4-carboxamide + (6S)-5,6,7,8-tetrahydrofolate. It catalyses the reaction IMP + H2O = 5-formamido-1-(5-phospho-D-ribosyl)imidazole-4-carboxamide. The protein operates within purine metabolism; IMP biosynthesis via de novo pathway; 5-formamido-1-(5-phospho-D-ribosyl)imidazole-4-carboxamide from 5-amino-1-(5-phospho-D-ribosyl)imidazole-4-carboxamide (10-formyl THF route): step 1/1. It participates in purine metabolism; IMP biosynthesis via de novo pathway; IMP from 5-formamido-1-(5-phospho-D-ribosyl)imidazole-4-carboxamide: step 1/1. This is Bifunctional purine biosynthesis protein PurH from Vibrio cholerae serotype O1 (strain ATCC 39541 / Classical Ogawa 395 / O395).